The sequence spans 1757 residues: MADEEMDGAERMDVSPEPPLAPQRPASWWDQQVDFYTAFLHHLAQLVPEIYFAEMDPDLEKQEESVQMSILTPLEWYLFGEDPDICLEKLKHSGAFQLCGKVFKSGETTYSCRDCAIDPTCVLCMDCFQSSVHKNHRYKMHTSTGGGFCDCGDTEAWKTGPFCVDHEPGRAGTTKESLHCPLNEEVIAQARRIFPSVIKYIVEMTIWEEEKELPPELQIREKNERYYCVLFNDEHHSYDHVIYSLQRALDCELAEAQLHTTAIDKEGRRAVKAGVYATCQEAKEDIKSHSENVSQHPLHVEVLHSVVMAHQKFALRLGSWMNKIMSYSSDFRQIFCQACLVEEPGSENPCLISRLMLWDAKLYKGARKILHELIFSSFFMEMEYKKLFAMEFVKYYKQLQKEYISDDHERSISITALSVQMLTVPTLARHLIEEQNVISVITETLLEVLPEYLDRNNKFNFQGYSQDKLGRVYAVICDLKYILISKPVIWTERLRAQFLEGFRSFLKILTCMQGMEEIRRQVGQHIEVDPDWEAAIAIQMQLKNILLMFQEWCACDEDLLLVAYKECHKAVMRCSTNFMSSTKTVVQLCGHSLETKSYKVSEDLVSIHLPLSRTLAGLHVRLSRLGAISRLHEFVPFDGFQVEVLVEYPLRCLVLVAQVVAEMWRRNGLSLISQVFYYQDVKCREEMYDKDIIMLQIGASIMDPNKFLLLVLQRYELTDAFNKTISTKDQDLIKQYNTLIEEMLQVLIYIVGERYVPGVGNVTREEVIMREITHLLCIEPMPHSAIARNLPENENNETGLENVINKVATFKKPGVSGHGVYELKDESLKDFNMYFYHYSKTQHSKAEHMQKKRRKQENKDEALPPPPPPEFCPAFSKVVNLLSCDVMMYILRTIFERAVDMESNLWTEGMLQMAFHILALGLLEEKQQLQKAPEEEVAFDFYHKASRLGSSAMNAQNIQMLLEKLKGIPQLESQKDMITWILQMFDTVKRLREKSCLVVATTSGLECVKSEEITHDKEKAERKRKAEAARLHRQKIMAQMSALQKNFIETHKLMYDNTSEVTGKEDSIMEEESTSAVSEASRIALGPKRGPAVTEKEVLTCILCQEEQEVKLENNAMVLSACVQKSTALTQHRGKPVDHLGETLDPLFMDPDLAHGTYTGSCGHVMHAVCWQKYFEAVQLSSQQRIHVDLFDLESGEYLCPLCKSLCNTVIPIIPLQPQKINSENAEALAQLLTLARWIQTVLARISGYNIKHAKGEAPAVPVLFNQGMGDSTFEFHSILSFGVQSSVKYSNSIKEMVILFATTIYRIGLKVPPDELDPRVPMMTWSTCAFTIQAIENLLGDEGKPLFGALQNRQHNGLKALMQFAVAQRTTCPQVLIHKHLARLLSVILPNLQSENTPGLLSVDLFHVLVGAVLAFPSLYWDDTVDLQPSPLSSSYNHLYLFHLITMAHMLQILLTTDTDLSSGPPLAEGEEDSEEARCASAFFVEVSQHTDGLAGCGAPGWYLWLSLRNGITPYLRCAALLFHYLLGVAPPEELFANSAEGEFSALCSYLSLPTNLFLLFQEYWDTIRPLLQRWCGDPALLKSLKQKSAVVRYPRKRNSLIELPEDYSCLLNQASHFRCPRSADDERKHPVLCLFCGAILCSQNICCQEIVNGEEVGACVFHALHCGAGVCIFLKIRECRVVLVEGKARGCAYPAPYLDEYGETDPGLKRGNPLHLSRERYRKLHLVWQQHCIIEEIARSQETNQMLFGFNWQLL.

Residues 1-24 (MADEEMDGAERMDVSPEPPLAPQR) form a disordered region. An N-acetylalanine modification is found at A2. The UBR-type zinc finger occupies 97 to 168 (QLCGKVFKSG…TGPFCVDHEP (72 aa)). Residues C99, C112, C115, C124, C127, H133, and H136 each contribute to the Zn(2+) site. F148 contacts a peptide. A Zn(2+)-binding site is contributed by C149. D150 serves as a coordination point for a peptide. A Zn(2+)-binding site is contributed by C151. D153 serves as a coordination point for a peptide. 2 residues coordinate Zn(2+): C163 and H166. A disordered region spans residues 842–868 (QHSKAEHMQKKRRKQENKDEALPPPPP). Positions 1022 to 1057 (RKRKAEAARLHRQKIMAQMSALQKNFIETHKLMYDN) are UBC2-binding region (U2BR). Residues C1101, C1104, C1162, H1164, H1167, and C1170 each coordinate Zn(2+). The segment at 1101–1204 (CILCQEEQEV…SGEYLCPLCK (104 aa)) adopts an RING-type; atypical zinc-finger fold. Position 1182 is a phosphoserine (S1182). Zn(2+) contacts are provided by C1200, C1203, C1635, C1638, and C1661.

The protein belongs to the E3 ubiquitin-protein ligase UBR1-like family. Interacts with RECQL4. Present in skeletal muscle and liver (at protein level). Broadly expressed, with highest levels in skeletal muscle and heart. Expressed in acinar cells of the pancreas. In testes, expressed primarily in spermatogonia.

It localises to the cytoplasm. The protein resides in the cytosol. The catalysed reaction is S-ubiquitinyl-[E2 ubiquitin-conjugating enzyme]-L-cysteine + [acceptor protein]-L-lysine = [E2 ubiquitin-conjugating enzyme]-L-cysteine + N(6)-ubiquitinyl-[acceptor protein]-L-lysine.. It participates in protein modification; protein ubiquitination. In terms of biological role, E3 ubiquitin-protein ligase which is a component of the N-end rule pathway. Recognizes and binds proteins bearing specific N-terminal residues (N-degrons) that are destabilizing according to the N-end rule, leading to their ubiquitination and subsequent degradation. Recognizes both type-1 and type-2 N-degrons, containing positively charged amino acids (Arg, Lys and His) and bulky and hydrophobic amino acids, respectively. Does not ubiquitinate proteins that are acetylated at the N-terminus. In contrast, it strongly binds methylated N-degrons. Binds leucine and is a negative regulator of the leucine-mTOR signaling pathway, thereby controlling cell growth. The sequence is that of E3 ubiquitin-protein ligase UBR1 from Mus musculus (Mouse).